Reading from the N-terminus, the 273-residue chain is WIMGHMVNSIAQIDEFVNLGANSIETDVSFDKQANPEYTYHGIPCDCGRNCLKWEYFNDFVKGLRRATTPGDSKYREKLVLVVFDLKTGSLYDNQAYDAGTKLAKNLLQHYWNNGNNGGRAYIVLSIPNLNHYKLIAGFKDTLKNEGHEDLLGKVGHDFSGNDDIPDVEEAYKKAGVTGHVWQSDGITNCFPRTLKRVRLAIANRDSGNGIINKVYYWTVDKRSTTRDSLDAGVDGIMTNYPDVIADVLSESAYKNKYKIATYEDNPWETFKA.

Residue histidine 5 is part of the active site. Mg(2+) is bound by residues glutamate 25 and aspartate 27. Catalysis depends on histidine 41, which acts as the Nucleophile. 2 cysteine pairs are disulfide-bonded: cysteine 45–cysteine 51 and cysteine 47–cysteine 190. Aspartate 85 serves as a coordination point for Mg(2+).

Belongs to the arthropod phospholipase D family. Class II subfamily. Requires Mg(2+) as cofactor. Expressed by the venom gland.

It is found in the secreted. The enzyme catalyses an N-(acyl)-sphingosylphosphocholine = an N-(acyl)-sphingosyl-1,3-cyclic phosphate + choline. It catalyses the reaction an N-(acyl)-sphingosylphosphoethanolamine = an N-(acyl)-sphingosyl-1,3-cyclic phosphate + ethanolamine. The catalysed reaction is a 1-acyl-sn-glycero-3-phosphocholine = a 1-acyl-sn-glycero-2,3-cyclic phosphate + choline. It carries out the reaction a 1-acyl-sn-glycero-3-phosphoethanolamine = a 1-acyl-sn-glycero-2,3-cyclic phosphate + ethanolamine. Its function is as follows. Dermonecrotic toxins cleave the phosphodiester linkage between the phosphate and headgroup of certain phospholipids (sphingolipid and lysolipid substrates), forming an alcohol (often choline) and a cyclic phosphate. This toxin acts on sphingomyelin (SM). It may also act on ceramide phosphoethanolamine (CPE), lysophosphatidylcholine (LPC) and lysophosphatidylethanolamine (LPE), but not on lysophosphatidylserine (LPS), and lysophosphatidylglycerol (LPG). It acts by transphosphatidylation, releasing exclusively cyclic phosphate products as second products. Induces dermonecrosis, hemolysis, increased vascular permeability, edema, inflammatory response, and platelet aggregation. This chain is Dermonecrotic toxin LruSicTox-alphaIC1d, found in Loxosceles rufescens (Mediterranean recluse spider).